A 648-amino-acid chain; its full sequence is Rho GTPase-activating protein 25 (648 aa).

The region spanning 46–151 (RPIKVGWLKK…WVKFLRRVAG (106 aa)) is the PH domain. Positions 160-354 (QRLDETVAYE…MMIRDHEVLF (195 aa)) constitute a Rho-GAP domain. Positions 356–559 (KSKDAPISPP…DLDSLQRTVQ (204 aa)) are disordered. Phosphoserine is present on residues S363, S396, and S403. The span at 393–410 (RTDSFSNTASSPDATSPT) shows a compositional bias: polar residues. A Phosphothreonine modification is found at T407. Residues 417 to 431 (QHQEDSGKAPRENPG) are compositionally biased toward basic and acidic residues. Polar residues-rich tracts occupy residues 453 to 462 (SAFQGTTSSK) and 497 to 515 (DQRT…SQGN). Position 537 is a phosphoserine (S537). Positions 540 to 641 (EAGSKNSGED…VKEFVKSMEK (102 aa)) form a coiled coil.

In terms of biological role, GTPase activator for the Rho-type GTPases by converting them to an inactive GDP-bound state. The protein is Rho GTPase-activating protein 25 (Arhgap25) of Mus musculus (Mouse).